The chain runs to 182 residues: MASELDGLPVIATRREEAEGFLQGLVSKSLGWARKYSLFTYPFVTACCGMEYMTMASARYDSDRFGAAMPRFSPRQADLLMVVGTVNCKQAPILQRVYEQMADPKWVMAFGVCASSGGFYDNYATVQGIDRVIPVDVYVPGCPPRPEQVLDGIMLLQKKIQNQSHKLIDRKPLPVISGGAGR.

4 residues coordinate [4Fe-4S] cluster: Cys47, Cys48, Cys113, and Cys142.

It belongs to the complex I 20 kDa subunit family. As to quaternary structure, NDH-1 is composed of 14 different subunits. Subunits NuoB, C, D, E, F, and G constitute the peripheral sector of the complex. [4Fe-4S] cluster is required as a cofactor.

The protein localises to the cell inner membrane. It carries out the reaction a quinone + NADH + 5 H(+)(in) = a quinol + NAD(+) + 4 H(+)(out). In terms of biological role, NDH-1 shuttles electrons from NADH, via FMN and iron-sulfur (Fe-S) centers, to quinones in the respiratory chain. The immediate electron acceptor for the enzyme in this species is believed to be ubiquinone. Couples the redox reaction to proton translocation (for every two electrons transferred, four hydrogen ions are translocated across the cytoplasmic membrane), and thus conserves the redox energy in a proton gradient. This Anaeromyxobacter sp. (strain K) protein is NADH-quinone oxidoreductase subunit B 2.